Consider the following 407-residue polypeptide: Elongation factor Tu (407 aa).

The region spanning 10–217 (KPHVNVGTIG…ALDSYIPEPE (208 aa)) is the tr-type G domain. Positions 19 to 26 (GHVDHGKT) are G1. Residue 19–26 (GHVDHGKT) participates in GTP binding. Residue T26 coordinates Mg(2+). The interval 60-64 (GITIA) is G2. Residues 81–84 (DCPG) are G3. Residues 81–85 (DCPGH) and 136–139 (NKAD) contribute to the GTP site. The interval 136–139 (NKAD) is G4. The G5 stretch occupies residues 184 to 186 (SAL).

Belongs to the TRAFAC class translation factor GTPase superfamily. Classic translation factor GTPase family. EF-Tu/EF-1A subfamily. Monomer.

It is found in the cytoplasm. The enzyme catalyses GTP + H2O = GDP + phosphate + H(+). Functionally, GTP hydrolase that promotes the GTP-dependent binding of aminoacyl-tRNA to the A-site of ribosomes during protein biosynthesis. In Saccharophagus degradans (strain 2-40 / ATCC 43961 / DSM 17024), this protein is Elongation factor Tu.